A 389-amino-acid polypeptide reads, in one-letter code: MPHTDYLFTSESVTEGHPDKMADQISDAVLDAVLAQDKKGRVACETLLKTGYVMIAGEITTTARIEYPKLAREVVKRIGYVSGDMGFDGNTCGVLVAVDQQSPDIGQGVDVGGAGDQGMMFGYACDETNELMPAPIQYAHAVTRQLAKARRGGLDFLRPDGKSQVTVEYRGGKVARIDTVVVSTQHSESVSNRKLHAALREEVIAKALPKKLVDRKTKVFINPTGRFVIGGPMGDTGVTGRKIIVDTYGGMGRHGGGAFSGKDPSKVDRSAAYMGRYIAKNVVAAGLARRCEVQVAYAIGVAEPVSVMVETFGTAAVPEERIAQAVREVFGLTPKQIIEGLDLLRPVYEKTAAYGHFGRTEKEFSWERTDKKDALRDAAGGKVRAVAGA.

His17 contributes to the ATP binding site. Residue Asp19 participates in Mg(2+) binding. Glu45 contributes to the K(+) binding site. Positions 58 and 101 each coordinate L-methionine. Positions 101–111 (QSPDIGQGVDV) are flexible loop. ATP contacts are provided by residues 160–162 (DGK), 226–227 (RF), Asp235, 241–242 (RK), Ala258, and Lys262. An L-methionine-binding site is contributed by Asp235. Lys266 serves as a coordination point for L-methionine.

It belongs to the AdoMet synthase family. As to quaternary structure, homotetramer; dimer of dimers. Mg(2+) is required as a cofactor. The cofactor is K(+).

The protein localises to the cytoplasm. The catalysed reaction is L-methionine + ATP + H2O = S-adenosyl-L-methionine + phosphate + diphosphate. It participates in amino-acid biosynthesis; S-adenosyl-L-methionine biosynthesis; S-adenosyl-L-methionine from L-methionine: step 1/1. Its function is as follows. Catalyzes the formation of S-adenosylmethionine (AdoMet) from methionine and ATP. The overall synthetic reaction is composed of two sequential steps, AdoMet formation and the subsequent tripolyphosphate hydrolysis which occurs prior to release of AdoMet from the enzyme. The protein is S-adenosylmethionine synthase of Anaeromyxobacter sp. (strain Fw109-5).